A 159-amino-acid chain; its full sequence is Putative pre-16S rRNA nuclease (159 aa).

The protein belongs to the YqgF nuclease family.

Its subcellular location is the cytoplasm. Its function is as follows. Could be a nuclease involved in processing of the 5'-end of pre-16S rRNA. This is Putative pre-16S rRNA nuclease from Thermobifida fusca (strain YX).